A 286-amino-acid polypeptide reads, in one-letter code: MNHIKNNPVIIIDGSLYLYASYYAFCNLENTSGKPCGAIYGMLKIIDNIFKKYKNLKKIIIIFDSSRKTFRNKLFKEYKKNRSSMPDLLVMQIQPLFEILKKIGIKTLTIPGIEADDVIGSLSYQLEKQGEKILILSHDKDMLQLVTENINIFHKKNNCIITSEIIQEKYGIKPKEFIDFLALMGDATDNIPGVPKIGIKTALFLINKFSNIENIYNNIEKIKSLPLRNAKNISIQLKNNKERALLSYKLARIKLDIPIDIKLKDIILKKYCSKNTFQIFKNYFSS.

One can recognise a 5'-3' exonuclease domain in the interval 172–270 (IKPKEFIDFL…IKLKDIILKK (99 aa)).

Functionally, 5'-3' exonuclease acting preferentially on double-stranded DNA. The chain is 5'-3' exonuclease from Buchnera aphidicola subsp. Acyrthosiphon pisum (strain APS) (Acyrthosiphon pisum symbiotic bacterium).